We begin with the raw amino-acid sequence, 543 residues long: ATP synthase subunit alpha (543 aa).

174–181 contacts ATP; the sequence is GDRQTGKT.

Belongs to the ATPase alpha/beta chains family. In terms of assembly, F-type ATPases have 2 components, CF(1) - the catalytic core - and CF(0) - the membrane proton channel. CF(1) has five subunits: alpha(3), beta(3), gamma(1), delta(1), epsilon(1). CF(0) has three main subunits: a(1), b(2) and c(9-12). The alpha and beta chains form an alternating ring which encloses part of the gamma chain. CF(1) is attached to CF(0) by a central stalk formed by the gamma and epsilon chains, while a peripheral stalk is formed by the delta and b chains.

It localises to the cell membrane. It carries out the reaction ATP + H2O + 4 H(+)(in) = ADP + phosphate + 5 H(+)(out). Functionally, produces ATP from ADP in the presence of a proton gradient across the membrane. The alpha chain is a regulatory subunit. The protein is ATP synthase subunit alpha of Bifidobacterium longum subsp. infantis (strain ATCC 15697 / DSM 20088 / JCM 1222 / NCTC 11817 / S12).